Here is a 95-residue protein sequence, read N- to C-terminus: Co-chaperonin GroES (95 aa).

Residues 20 to 45 (KTKGGLIIPDSAKEKPAEGEITSVGE) form a disordered region.

This sequence belongs to the GroES chaperonin family. As to quaternary structure, heptamer of 7 subunits arranged in a ring. Interacts with the chaperonin GroEL.

It localises to the cytoplasm. In terms of biological role, together with the chaperonin GroEL, plays an essential role in assisting protein folding. The GroEL-GroES system forms a nano-cage that allows encapsulation of the non-native substrate proteins and provides a physical environment optimized to promote and accelerate protein folding. GroES binds to the apical surface of the GroEL ring, thereby capping the opening of the GroEL channel. The protein is Co-chaperonin GroES of Paracoccus denitrificans.